A 369-amino-acid polypeptide reads, in one-letter code: Dual specificity protein phosphatase 1-B (369 aa).

In terms of domain architecture, Rhodanese spans 21-138; that stretch reads RAHKCLILDC…FSSQCPEFCN (118 aa). Thr-168 bears the Phosphothreonine; by MAPK1 mark. Positions 175 to 316 constitute a Tyrosine-protein phosphatase domain; it reads GPVEILPFLY…LLQFESQVLA (142 aa). The Phosphocysteine intermediate role is filled by Cys-260.

This sequence belongs to the protein-tyrosine phosphatase family. Non-receptor class dual specificity subfamily. Post-translationally, phosphorylated by MAPK1/ERK2 at Thr-168 and at one or more serine residues in a progesterone-dependent manner. Phosphorylation reduces its rate of degradation but does not seem to affect phosphatase activity.

Its subcellular location is the nucleus. The catalysed reaction is O-phospho-L-seryl-[protein] + H2O = L-seryl-[protein] + phosphate. It carries out the reaction O-phospho-L-threonyl-[protein] + H2O = L-threonyl-[protein] + phosphate. The enzyme catalyses O-phospho-L-tyrosyl-[protein] + H2O = L-tyrosyl-[protein] + phosphate. In terms of biological role, dual specificity phosphatase that dephosphorylates MAP kinase MAPK1/ERK2 on both 'Thr-188' and 'Tyr-190', regulating its activity during the meiotic cell cycle. The protein is Dual specificity protein phosphatase 1-B of Xenopus laevis (African clawed frog).